A 262-amino-acid chain; its full sequence is Transcription factor of morphogenesis MCM1 (262 aa).

Disordered stretches follow at residues 1–62 (MAIK…ERRK) and 140–262 (EEGL…QQYQ). Low complexity predominate over residues 17-35 (NSHSTNNNNNSNNSNSNNN). Residues 58 to 118 (KERRKIEIKF…GLVYTFTTPK (61 aa)) form the MADS-box domain. The segment covering 150-170 (QSDGNTGDSPDQSPAPATNPN) has biased composition (polar residues). 3 stretches are compositionally biased toward low complexity: residues 182-198 (QQQQQQQQQAQQQAQQQ), 224-239 (PQQQGQHQPGIPLQGG), and 249-262 (NIQNNNIPNQQQYQ).

In terms of assembly, interacts with AHR1.

The protein localises to the nucleus. Functionally, transcription factor that is recruited by AHR1 to the promoters of genes involved in biofilm formation, which include several key adhesion genes. Plays an important role in cell adhesion, hyphal growth and virulence. Implicated in the regulation of opaque-phase-specific gene expression. The protein is Transcription factor of morphogenesis MCM1 (MCM1) of Candida albicans (strain SC5314 / ATCC MYA-2876) (Yeast).